Here is a 284-residue protein sequence, read N- to C-terminus: Probable endonuclease 4 (284 aa).

Positions 66, 106, 142, 176, 179, 213, 226, 228, and 258 each coordinate Zn(2+).

The protein belongs to the AP endonuclease 2 family. Requires Zn(2+) as cofactor.

The enzyme catalyses Endonucleolytic cleavage to 5'-phosphooligonucleotide end-products.. In terms of biological role, endonuclease IV plays a role in DNA repair. It cleaves phosphodiester bonds at apurinic or apyrimidinic (AP) sites, generating a 3'-hydroxyl group and a 5'-terminal sugar phosphate. In Natranaerobius thermophilus (strain ATCC BAA-1301 / DSM 18059 / JW/NM-WN-LF), this protein is Probable endonuclease 4.